A 350-amino-acid polypeptide reads, in one-letter code: Uroporphyrinogen decarboxylase (350 aa).

Residues 28–32 (RQAGR), D78, Y154, T209, and H325 each bind substrate.

Belongs to the uroporphyrinogen decarboxylase family. As to quaternary structure, homodimer.

The protein localises to the cytoplasm. The catalysed reaction is uroporphyrinogen III + 4 H(+) = coproporphyrinogen III + 4 CO2. The protein operates within porphyrin-containing compound metabolism; protoporphyrin-IX biosynthesis; coproporphyrinogen-III from 5-aminolevulinate: step 4/4. In terms of biological role, catalyzes the decarboxylation of four acetate groups of uroporphyrinogen-III to yield coproporphyrinogen-III. The chain is Uroporphyrinogen decarboxylase from Nitrobacter hamburgensis (strain DSM 10229 / NCIMB 13809 / X14).